The following is a 213-amino-acid chain: Imidazole glycerol phosphate synthase subunit HisH (213 aa).

The Glutamine amidotransferase type-1 domain occupies 3 to 213; sequence MIGVIDYGMG…VGIVTGRENG (211 aa). Catalysis depends on Cys81, which acts as the Nucleophile. Active-site residues include His188 and Glu190.

Heterodimer of HisH and HisF.

The protein localises to the cytoplasm. It catalyses the reaction 5-[(5-phospho-1-deoxy-D-ribulos-1-ylimino)methylamino]-1-(5-phospho-beta-D-ribosyl)imidazole-4-carboxamide + L-glutamine = D-erythro-1-(imidazol-4-yl)glycerol 3-phosphate + 5-amino-1-(5-phospho-beta-D-ribosyl)imidazole-4-carboxamide + L-glutamate + H(+). It carries out the reaction L-glutamine + H2O = L-glutamate + NH4(+). It participates in amino-acid biosynthesis; L-histidine biosynthesis; L-histidine from 5-phospho-alpha-D-ribose 1-diphosphate: step 5/9. Its function is as follows. IGPS catalyzes the conversion of PRFAR and glutamine to IGP, AICAR and glutamate. The HisH subunit catalyzes the hydrolysis of glutamine to glutamate and ammonia as part of the synthesis of IGP and AICAR. The resulting ammonia molecule is channeled to the active site of HisF. This is Imidazole glycerol phosphate synthase subunit HisH from Geobacillus thermodenitrificans (strain NG80-2).